Consider the following 191-residue polypeptide: uncharacterized protein (191 aa).

A signal peptide spans M1–G17. The tract at residues T82 to I148 is disordered. A helical membrane pass occupies residues V168–E188.

It is found in the membrane. This is an uncharacterized protein from Saccharomyces cerevisiae (strain ATCC 204508 / S288c) (Baker's yeast).